The following is a 101-amino-acid chain: Ferredoxin Fdx2 (101 aa).

2 consecutive 4Fe-4S ferredoxin-type domains span residues 1 to 29 and 31 to 64; these read MATY…EGDE and YVID…PNPQ. The [4Fe-4S] cluster site is built by Cys-9, Cys-12, Cys-15, Cys-19, Cys-38, Cys-41, Cys-50, and Cys-54.

[4Fe-4S] cluster is required as a cofactor.

Functionally, ferredoxins are iron-sulfur proteins that transfer electrons in a wide variety of metabolic reactions. Fdx2 can receive electrons from both FdR_A and FdR_B ferredoxin reductases, with a preference for FdR_B compared with FdR_A, and transfer the electrons to the cytochrome P450 CYP260A1. The sequence is that of Ferredoxin Fdx2 from Sorangium cellulosum (strain So ce56) (Polyangium cellulosum (strain So ce56)).